The following is a 689-amino-acid chain: MSDASGPLQPDRPEADVPFRVEAPFDPAGDQPDAIAELVAGYEQGAQQQTLLGVTGSGKTNTVSWVVEELQQPTLVIAHNKTLAAQLYEEFRSLFPDNAVEYFVSYYNYYQPEAYVEQTDKYIEKDASINDEIDRLRHSATRSLLTRDDVIVVASVSAIYGLGDPRNYEEMSLRVERGQSIGRDQLLAKLVDLNYDRNDVDFTQGTFRVRGDTVEVYPMYGRYPVRVEFWGDEIDRMAKLDPLEGTVESEEPAVLFHPAEHYSVPDAEMEQAIERIRTDMHERVRHFERTGDMVAAQRIEERTTFDLEMMAEAGYCSGIENYSVYLSDREVGDAPYTLLDYFPDDFLTVIDESHRTVPQIKGQYEGDKSRKDSLVDNGFRLPTAYDNRPLTFAEFADKTDRTLYVSATPGDHERAQSANVVEQIVRPTHLVDPDISIADATGQVEDLMDRIDERVARDERVLVTTLTKRMAEDLTEYLEEAGVAVEYMHDETDTLERHELVRGLRLGEYDVLVGINLLREGLDIPEVSLVAILDADQQGFLRSETSLVQTMGRAARNVNGEVVLYADETTDAMQAAIDETQRRRRIQRAFNEDHGTTPTTIEKAVGDMNLPGAETDTADVAGDAPSDEQEAALLVEDLEARMEDAASNLEFELAADIRDRMRELREAFDLDGGDAPEDPGGVAPETEDW.

The disordered stretch occupies residues 1–26 (MSDASGPLQPDRPEADVPFRVEAPFD). One can recognise a Helicase ATP-binding domain in the interval 40–422 (AGYEQGAQQQ…ERAQSANVVE (383 aa)). 53-60 (GVTGSGKT) contributes to the ATP binding site. The Beta-hairpin signature appears at 106–129 (YYNYYQPEAYVEQTDKYIEKDASI). The Helicase C-terminal domain occupies 443 to 605 (QVEDLMDRID…TTPTTIEKAV (163 aa)). Residues 632–667 (ALLVEDLEARMEDAASNLEFELAADIRDRMRELREA) form the UVR domain. Residues 668–689 (FDLDGGDAPEDPGGVAPETEDW) form a disordered region.

This sequence belongs to the UvrB family. As to quaternary structure, forms a heterotetramer with UvrA during the search for lesions. Interacts with UvrC in an incision complex.

The protein resides in the cytoplasm. Its function is as follows. The UvrABC repair system catalyzes the recognition and processing of DNA lesions. A damage recognition complex composed of 2 UvrA and 2 UvrB subunits scans DNA for abnormalities. Upon binding of the UvrA(2)B(2) complex to a putative damaged site, the DNA wraps around one UvrB monomer. DNA wrap is dependent on ATP binding by UvrB and probably causes local melting of the DNA helix, facilitating insertion of UvrB beta-hairpin between the DNA strands. Then UvrB probes one DNA strand for the presence of a lesion. If a lesion is found the UvrA subunits dissociate and the UvrB-DNA preincision complex is formed. This complex is subsequently bound by UvrC and the second UvrB is released. If no lesion is found, the DNA wraps around the other UvrB subunit that will check the other stand for damage. The polypeptide is UvrABC system protein B (Halobacterium salinarum (strain ATCC 700922 / JCM 11081 / NRC-1) (Halobacterium halobium)).